The primary structure comprises 504 residues: ATP synthase subunit alpha, chloroplastic (504 aa).

170–177 contacts ATP; the sequence is GDRQTGKT.

It belongs to the ATPase alpha/beta chains family. As to quaternary structure, F-type ATPases have 2 components, CF(1) - the catalytic core - and CF(0) - the membrane proton channel. CF(1) has five subunits: alpha(3), beta(3), gamma(1), delta(1), epsilon(1). CF(0) has four main subunits: a, b, b' and c.

Its subcellular location is the plastid. It localises to the chloroplast thylakoid membrane. It catalyses the reaction ATP + H2O + 4 H(+)(in) = ADP + phosphate + 5 H(+)(out). Its function is as follows. Produces ATP from ADP in the presence of a proton gradient across the membrane. The alpha chain is a regulatory subunit. The protein is ATP synthase subunit alpha, chloroplastic of Jasminum nudiflorum (Winter jasmine).